Reading from the N-terminus, the 272-residue chain is Tryptophan synthase alpha chain (272 aa).

Active-site proton acceptor residues include Glu-49 and Asp-60.

It belongs to the TrpA family. Tetramer of two alpha and two beta chains.

It catalyses the reaction (1S,2R)-1-C-(indol-3-yl)glycerol 3-phosphate + L-serine = D-glyceraldehyde 3-phosphate + L-tryptophan + H2O. The protein operates within amino-acid biosynthesis; L-tryptophan biosynthesis; L-tryptophan from chorismate: step 5/5. The alpha subunit is responsible for the aldol cleavage of indoleglycerol phosphate to indole and glyceraldehyde 3-phosphate. This is Tryptophan synthase alpha chain from Hydrogenovibrio crunogenus (strain DSM 25203 / XCL-2) (Thiomicrospira crunogena).